Consider the following 153-residue polypeptide: Regulator of sigma D (153 aa).

Belongs to the Rsd/AlgQ family. Interacts with RpoD.

It localises to the cytoplasm. Functionally, binds RpoD and negatively regulates RpoD-mediated transcription activation by preventing the interaction between the primary sigma factor RpoD with the catalytic core of the RNA polymerase and with promoter DNA. May be involved in replacement of the RNA polymerase sigma subunit from RpoD to RpoS during the transition from exponential growth to the stationary phase. This chain is Regulator of sigma D, found in Pectobacterium atrosepticum (strain SCRI 1043 / ATCC BAA-672) (Erwinia carotovora subsp. atroseptica).